The chain runs to 453 residues: tRNA modification GTPase MnmE (453 aa).

R22, E79, and K119 together coordinate (6S)-5-formyl-5,6,7,8-tetrahydrofolate. One can recognise a TrmE-type G domain in the interval 215 to 376 (GMKVVIAGRP…LKQHLKSLMG (162 aa)). Residue N225 coordinates K(+). GTP is bound by residues 225-230 (NAGKSS), 244-250 (TDIAGTT), 269-272 (DTAG), and 334-337 (NKAD). Position 229 (S229) interacts with Mg(2+). Residues T244, I246, and T249 each contribute to the K(+) site. A Mg(2+)-binding site is contributed by T250. K453 serves as a coordination point for (6S)-5-formyl-5,6,7,8-tetrahydrofolate.

The protein belongs to the TRAFAC class TrmE-Era-EngA-EngB-Septin-like GTPase superfamily. TrmE GTPase family. Homodimer. Heterotetramer of two MnmE and two MnmG subunits. It depends on K(+) as a cofactor.

It is found in the cytoplasm. In terms of biological role, exhibits a very high intrinsic GTPase hydrolysis rate. Involved in the addition of a carboxymethylaminomethyl (cmnm) group at the wobble position (U34) of certain tRNAs, forming tRNA-cmnm(5)s(2)U34. The sequence is that of tRNA modification GTPase MnmE from Shewanella amazonensis (strain ATCC BAA-1098 / SB2B).